The primary structure comprises 253 residues: Triosephosphate isomerase, cytosolic (253 aa).

The substrate site is built by Asn10 and Lys12. The Electrophile role is filled by His96. Glu166 functions as the Proton acceptor in the catalytic mechanism.

Belongs to the triosephosphate isomerase family. In terms of assembly, homodimer.

It localises to the cytoplasm. The enzyme catalyses D-glyceraldehyde 3-phosphate = dihydroxyacetone phosphate. The protein operates within carbohydrate biosynthesis; gluconeogenesis. Its pathway is carbohydrate degradation; glycolysis; D-glyceraldehyde 3-phosphate from glycerone phosphate: step 1/1. This chain is Triosephosphate isomerase, cytosolic (TPI), found in Oryza sativa subsp. japonica (Rice).